A 523-amino-acid polypeptide reads, in one-letter code: Sialate O-acetylesterase (523 aa).

The N-terminal stretch at 1 to 23 is a signal peptide; the sequence is MVAPGLVLGLVLPLILWADRSAG. 6 N-linked (GlcNAc...) asparagine glycosylation sites follow: Asn-107, Asn-138, Asn-267, Asn-290, Asn-401, and Asn-422.

In terms of tissue distribution, widely expressed with high expression in the testis, prostate, and colon.

It is found in the lysosome. Its subcellular location is the cytoplasm. It catalyses the reaction N-acetyl-9-O-acetylneuraminate + H2O = N-acetylneuraminate + acetate + H(+). It carries out the reaction an Ac-O-9-sialoglycoconjugate + H2O = a sialoglycoconjugate + acetate + H(+). Its function is as follows. Catalyzes the removal of O-acetyl ester groups from position 9 of the free diacetylated sialate N-acetyl-9-O-acetylneuraminate (Neu5,9Ac2) in the cytosol and of the diacetylated sialate residues of sialylglycoconjugates in the lysosomes. Together with the sialate-O-acetyltransferase they regulate the balance of acetylated sialoglycoconjugates, key players in various processes such as cell-cell interactions, host-pathogen recognition, and tumor antigenicity. The chain is Sialate O-acetylesterase (SIAE) from Homo sapiens (Human).